A 120-amino-acid chain; its full sequence is Insulin-like peptide 3 (120 aa).

Positions 1–29 (MGIEMRCQDRRILLPSLLLLILMIGGVQA) are cleaved as a signal peptide. Disulfide bonds link Cys-34–Cys-101, Cys-46–Cys-114, and Cys-100–Cys-105. Positions 51 to 89 (NAMTKRTLDPVNFNQIDGFEDRSLLERLLSDSSVQMLKT) are cleaved as a propeptide — connecting peptide.

It belongs to the insulin family. As to quaternary structure, heterodimer of a B chain and an A chain linked by two disulfide bonds. As to expression, expressed at a high level in seven cells of each larval brain hemisphere that may correspond to neurosecretory cells.

Its subcellular location is the secreted. Functionally, possible ligand of InR/insulin-like receptor. The sequence is that of Insulin-like peptide 3 from Drosophila melanogaster (Fruit fly).